Reading from the N-terminus, the 274-residue chain is NH(3)-dependent NAD(+) synthetase (274 aa).

46 to 53 (GISGGQDS) contributes to the ATP binding site. Residue Asp-52 participates in Mg(2+) binding. Arg-140 serves as a coordination point for deamido-NAD(+). Thr-160 contributes to the ATP binding site. A Mg(2+)-binding site is contributed by Glu-165. The deamido-NAD(+) site is built by Lys-173 and Asp-180. Residues Lys-189 and Thr-211 each contribute to the ATP site. Deamido-NAD(+) is bound at residue 260–261 (HK).

It belongs to the NAD synthetase family. As to quaternary structure, homodimer.

The enzyme catalyses deamido-NAD(+) + NH4(+) + ATP = AMP + diphosphate + NAD(+) + H(+). It participates in cofactor biosynthesis; NAD(+) biosynthesis; NAD(+) from deamido-NAD(+) (ammonia route): step 1/1. Functionally, catalyzes the ATP-dependent amidation of deamido-NAD to form NAD. Uses ammonia as a nitrogen source. This Streptococcus pyogenes serotype M6 (strain ATCC BAA-946 / MGAS10394) protein is NH(3)-dependent NAD(+) synthetase.